An 848-amino-acid polypeptide reads, in one-letter code: Phosphatidate phosphatase LPIN3 (848 aa).

The segment at 1-108 is N-LIP; that stretch reads MNYVGQLAET…VPPRLCTSPI (108 aa). 3 disordered regions span residues 97–233, 271–298, and 314–373; these read EDVP…SPLR, PEEP…PGVR, and AVDS…NQHL. The short motif at 135 to 144 is the Nuclear localization signal element; the sequence is GRRKRRRRRK. Residues 135–146 are compositionally biased toward basic residues; the sequence is GRRKRRRRRKPR. A compositionally biased stretch (acidic residues) spans 151 to 164; that stretch reads DAVDSSSEELEAGA. Phosphoserine occurs at positions 155 and 156. Residues 165–191 are compositionally biased toward low complexity; it reads ESELTLLEKPTPESPSAQEAEEPSSQP. Ser218 is subject to Phosphoserine. Residues 271–282 show a composition bias toward low complexity; the sequence is PEEPSPSSSPSE. The segment covering 342-358 has biased composition (polar residues); sequence KSWSWTTPESHTPSGHP. At Ser460 the chain carries Phosphoserine. Positions 536 to 556 are enriched in basic and acidic residues; sequence EEHSSQREKAATRKQQGEKTE. Residues 536–568 form a disordered region; the sequence is EEHSSQREKAATRKQQGEKTEVLSSDDDVPDSP. Positions 587 to 789 are C-LIP; it reads YKKSLRLSSD…RIFTVNPRGE (203 aa). A DXDXT motif motif is present at residues 641–645; it reads DIDGT. Residues 652 to 656 carry the LXXIL motif motif; that stretch reads LGHIL.

This sequence belongs to the lipin family. It depends on Mg(2+) as a cofactor. As to expression, significant expression in intestine and other regions of the gastrointestinal tract.

It localises to the nucleus. It catalyses the reaction a 1,2-diacyl-sn-glycero-3-phosphate + H2O = a 1,2-diacyl-sn-glycerol + phosphate. With respect to regulation, inhibited by N-ethylmaleimide. Magnesium-dependent phosphatidate phosphatase enzyme which catalyzes the conversion of phosphatidic acid to diacylglycerol during triglyceride, phosphatidylcholine and phosphatidylethanolamine biosynthesis therefore regulates fatty acid metabolism. The polypeptide is Phosphatidate phosphatase LPIN3 (Mus musculus (Mouse)).